Consider the following 157-residue polypeptide: Cuticle protein 19 (157 aa).

6 repeat units span residues 11–14 (AAPA), 18–21 (AAPA), 24–27 (AAPA), 29–32 (AAPA), 39–42 (AAPA), and 47–50 (AAPA). The Chitin-binding type R&amp;R domain occupies 56–127 (YPKYAFEYGV…SGPSAHPAPA (72 aa)). Repeat 7 spans residues 141–144 (AAPA).

In terms of biological role, component of the cuticle of migratory locust which contains more than 100 different structural proteins. The sequence is that of Cuticle protein 19 from Locusta migratoria (Migratory locust).